Reading from the N-terminus, the 428-residue chain is Serine--tRNA ligase (428 aa).

231 to 233 (TAE) lines the L-serine pocket. An ATP-binding site is contributed by 262 to 264 (RSE). Residue glutamate 285 participates in L-serine binding. 349–352 (EISS) contributes to the ATP binding site. Serine 385 is a binding site for L-serine.

It belongs to the class-II aminoacyl-tRNA synthetase family. Type-1 seryl-tRNA synthetase subfamily. As to quaternary structure, homodimer. The tRNA molecule binds across the dimer.

The protein localises to the cytoplasm. The enzyme catalyses tRNA(Ser) + L-serine + ATP = L-seryl-tRNA(Ser) + AMP + diphosphate + H(+). It carries out the reaction tRNA(Sec) + L-serine + ATP = L-seryl-tRNA(Sec) + AMP + diphosphate + H(+). It functions in the pathway aminoacyl-tRNA biosynthesis; selenocysteinyl-tRNA(Sec) biosynthesis; L-seryl-tRNA(Sec) from L-serine and tRNA(Sec): step 1/1. Catalyzes the attachment of serine to tRNA(Ser). Is also able to aminoacylate tRNA(Sec) with serine, to form the misacylated tRNA L-seryl-tRNA(Sec), which will be further converted into selenocysteinyl-tRNA(Sec). This Cellvibrio japonicus (strain Ueda107) (Pseudomonas fluorescens subsp. cellulosa) protein is Serine--tRNA ligase.